A 662-amino-acid polypeptide reads, in one-letter code: Sporulation protein RMD8 (662 aa).

3 disordered regions span residues 1–136 (MSYK…RTSK), 286–320 (YELE…SFNP), and 346–406 (LKKE…QNDF). The residue at position 2 (Ser2) is an N-acetylserine. Over residues 99 to 121 (SARREERLSSSSSDRPRQYERLS) the composition is skewed to basic and acidic residues. The segment covering 286–304 (YELETSGNNNNANQDTTTV) has biased composition (polar residues). The span at 383-395 (SSRSPASPSSIST) shows a compositional bias: low complexity. The chain crosses the membrane as a helical span at residues 630–647 (VTWWFILVILFGVIFSLT).

This sequence belongs to the RMD1/sif2 family.

It is found in the membrane. In terms of biological role, required for sporulation. The polypeptide is Sporulation protein RMD8 (RMD8) (Saccharomyces cerevisiae (strain ATCC 204508 / S288c) (Baker's yeast)).